The primary structure comprises 738 residues: Conserved oligomeric Golgi complex subunit 4 (738 aa).

The protein belongs to the COG4 family. Component of the conserved oligomeric Golgi complex which is composed of eight different subunits and is required for normal Golgi morphology and localization. Interacts with COG2 and COG3.

Its subcellular location is the golgi apparatus membrane. In terms of biological role, required for normal Golgi function. The protein is Conserved oligomeric Golgi complex subunit 4 of Arabidopsis thaliana (Mouse-ear cress).